Consider the following 135-residue polypeptide: MAEAFKFELVSPERLLVSEQVESVVIPGAEGEMTVMAHHAPVMTTIKPGVVTVKTASGGEERYVVFGGFADIVPAGCTLLAESAVAVKDVDRADLARRIQEAKEDAADAKDDQARSKAEQFLSQLTTLEGAILPA.

The protein belongs to the ATPase epsilon chain family. In terms of assembly, F-type ATPases have 2 components, CF(1) - the catalytic core - and CF(0) - the membrane proton channel. CF(1) has five subunits: alpha(3), beta(3), gamma(1), delta(1), epsilon(1). CF(0) has three main subunits: a, b and c.

The protein resides in the cell inner membrane. Its function is as follows. Produces ATP from ADP in the presence of a proton gradient across the membrane. The sequence is that of ATP synthase epsilon chain from Mesorhizobium japonicum (strain LMG 29417 / CECT 9101 / MAFF 303099) (Mesorhizobium loti (strain MAFF 303099)).